The chain runs to 455 residues: Cysteinylglycine-S-conjugate dipeptidase (455 aa).

Histidine 92 contacts Zn(2+). The active site involves aspartate 94. Aspartate 125 lines the Zn(2+) pocket. The active-site Proton acceptor is the glutamate 158. Residues glutamate 159, glutamate 163, and histidine 428 each coordinate Zn(2+).

Belongs to the peptidase M20F family. The cofactor is Zn(2+).

It carries out the reaction an S-substituted L-cysteinylglycine + H2O = an S-substituted L-cysteine + glycine. It catalyses the reaction S-(1-hydroxy-3-methylhexan-3-yl)-L-cysteinylglycine + H2O = S-(1-hydroxy-3-methylhexan-3-yl)-L-cysteine + glycine. The enzyme catalyses S-benzyl-L-cysteinylglycine + H2O = S-benzyl-L-cysteine + glycine. Metallopeptidase that hydrolyzes the Cys-Gly bond of Cys-Gly-S-conjugates. Involved in the formation of the human body odorant 3-methyl-3-sulfanylhexan-1-ol (3M3SH) from odorless axilla secretions. Catalyzes the hydrolysis of the Cys-Gly bond of the Cys-Gly-S-conjugate of 3M3SH, a key precursor secreted by apocrine glands in human axilla skin. The Cys-S-conjugate obtained is then cleaved by the Cys-S-conjugate beta-lyase MetC, which finally releases 3M3SH. The protein is Cysteinylglycine-S-conjugate dipeptidase of Corynebacterium striatum.